A 546-amino-acid polypeptide reads, in one-letter code: Chaperonin GroEL (546 aa).

Residues 30-33, Lys51, 87-91, Gly415, and Asp497 each bind ATP; these read TLGP and DGTTT. A disordered region spans residues 527–546; the sequence is PKKDSPAPAMPGGGMGGMDF. Over residues 537 to 546 the composition is skewed to gly residues; the sequence is PGGGMGGMDF.

It belongs to the chaperonin (HSP60) family. As to quaternary structure, forms a cylinder of 14 subunits composed of two heptameric rings stacked back-to-back. Interacts with the co-chaperonin GroES.

The protein resides in the cytoplasm. The enzyme catalyses ATP + H2O + a folded polypeptide = ADP + phosphate + an unfolded polypeptide.. Its function is as follows. Together with its co-chaperonin GroES, plays an essential role in assisting protein folding. The GroEL-GroES system forms a nano-cage that allows encapsulation of the non-native substrate proteins and provides a physical environment optimized to promote and accelerate protein folding. This Methylobacterium radiotolerans (strain ATCC 27329 / DSM 1819 / JCM 2831 / NBRC 15690 / NCIMB 10815 / 0-1) protein is Chaperonin GroEL.